The following is a 131-amino-acid chain: Small ribosomal subunit protein eS24 (131 aa).

Residues 93–131 (RHGLYEKKKTSRKQRKERKNRMKKVRGTKKASVGAAGKK) are disordered. Basic residues predominate over residues 101-121 (KTSRKQRKERKNRMKKVRGTK).

The protein belongs to the eukaryotic ribosomal protein eS24 family. As to quaternary structure, component of the small ribosomal subunit. Part of the small subunit (SSU) processome, composed of more than 70 proteins and the RNA chaperone small nucleolar RNA (snoRNA) U3.

The protein resides in the cytoplasm. It localises to the nucleus. It is found in the nucleolus. Its function is as follows. Component of the small ribosomal subunit. The ribosome is a large ribonucleoprotein complex responsible for the synthesis of proteins in the cell. Required for processing of pre-rRNA and maturation of 40S ribosomal subunits. Part of the small subunit (SSU) processome, first precursor of the small eukaryotic ribosomal subunit. During the assembly of the SSU processome in the nucleolus, many ribosome biogenesis factors, an RNA chaperone and ribosomal proteins associate with the nascent pre-rRNA and work in concert to generate RNA folding, modifications, rearrangements and cleavage as well as targeted degradation of pre-ribosomal RNA by the RNA exosome. This is Small ribosomal subunit protein eS24 (rps24) from Ictalurus punctatus (Channel catfish).